A 282-amino-acid chain; its full sequence is Bifunctional protein FolD (282 aa).

Residues 165–167 (NRS), S190, and I231 contribute to the NADP(+) site.

Belongs to the tetrahydrofolate dehydrogenase/cyclohydrolase family. In terms of assembly, homodimer.

The enzyme catalyses (6R)-5,10-methylene-5,6,7,8-tetrahydrofolate + NADP(+) = (6R)-5,10-methenyltetrahydrofolate + NADPH. It catalyses the reaction (6R)-5,10-methenyltetrahydrofolate + H2O = (6R)-10-formyltetrahydrofolate + H(+). It functions in the pathway one-carbon metabolism; tetrahydrofolate interconversion. Functionally, catalyzes the oxidation of 5,10-methylenetetrahydrofolate to 5,10-methenyltetrahydrofolate and then the hydrolysis of 5,10-methenyltetrahydrofolate to 10-formyltetrahydrofolate. This Clostridium botulinum (strain ATCC 19397 / Type A) protein is Bifunctional protein FolD.